A 62-amino-acid polypeptide reads, in one-letter code: Metallothionein-4 (62 aa).

A divalent metal cation is bound by residues cysteine 6, cysteine 8, cysteine 14, cysteine 16, cysteine 20, cysteine 22, cysteine 25, cysteine 27, cysteine 34, cysteine 35, cysteine 37, cysteine 38, cysteine 42, cysteine 45, cysteine 49, cysteine 51, cysteine 58, cysteine 60, and cysteine 61.

Belongs to the metallothionein superfamily. Type 1 family.

Functionally, seems to bind zinc and copper. Could play a special role in regulating zinc metabolism during the differentiation of stratified epithelia. The protein is Metallothionein-4 (MT4) of Homo sapiens (Human).